We begin with the raw amino-acid sequence, 95 residues long: Cytosolic calcium-binding protein 3 (95 aa).

6 consecutive repeat copies span residues 30-35, 39-43, 54-59, 67-71, 75-79, and 90-94. The interval 30 to 94 is 6 X 5 AA approximate repeats of V-E-E-K-K; sequence VEDAEKTNED…AEEVAVEKAK (65 aa). Positions 54–95 are disordered; it reads VEEEKKAEEVTETPEEKKTEALEEKQTEVAAAEEVAVEKAKE. The segment covering 55 to 80 has biased composition (basic and acidic residues); the sequence is EEEKKAEEVTETPEEKKTEALEEKQT.

As to expression, low levels in roots (e.g. in cambium) and barely expressed in stems, shoots, flowers, siliques and leaves.

The protein localises to the cytoplasm. It is found in the cytosol. Binds calcium Ca(2+) and may act as a signal mediator to buffer Ca(2+). The sequence is that of Cytosolic calcium-binding protein 3 from Arabidopsis thaliana (Mouse-ear cress).